The sequence spans 429 residues: 3-phosphoshikimate 1-carboxyvinyltransferase (429 aa).

Positions 22, 23, and 27 each coordinate 3-phosphoshikimate. Phosphoenolpyruvate is bound at residue Lys-22. Residues Gly-93 and Arg-122 each contribute to the phosphoenolpyruvate site. Residues Ser-168, Ser-169, Gln-170, Ser-196, Asp-311, and Lys-338 each coordinate 3-phosphoshikimate. Gln-170 serves as a coordination point for phosphoenolpyruvate. Asp-311 (proton acceptor) is an active-site residue. Arg-342 and Arg-384 together coordinate phosphoenolpyruvate.

This sequence belongs to the EPSP synthase family. As to quaternary structure, monomer.

It localises to the cytoplasm. The catalysed reaction is 3-phosphoshikimate + phosphoenolpyruvate = 5-O-(1-carboxyvinyl)-3-phosphoshikimate + phosphate. The protein operates within metabolic intermediate biosynthesis; chorismate biosynthesis. Its function is as follows. Catalyzes the transfer of the enolpyruvyl moiety of phosphoenolpyruvate (PEP) to the 5-hydroxyl of shikimate-3-phosphate (S3P) to produce enolpyruvyl shikimate-3-phosphate and inorganic phosphate. The protein is 3-phosphoshikimate 1-carboxyvinyltransferase of Methanocaldococcus jannaschii (strain ATCC 43067 / DSM 2661 / JAL-1 / JCM 10045 / NBRC 100440) (Methanococcus jannaschii).